The following is a 1041-amino-acid chain: Desmoglein-4 (1041 aa).

Positions 1 to 23 (MDWLLFRNICLLILFMVVLGVNS) are cleaved as a signal peptide. Positions 24–49 (EFIVEVKELDIENGTTTWQTVRRQKR) are excised as a propeptide. 4 Cadherin domains span residues 50–157 (EWIK…PPVF), 158–269 (TQNV…FPIL), 270–385 (EKTS…GPTF), and 389–497 (SMTF…CPVI). The Extracellular segment spans residues 50–634 (EWIKFAAACR…RQSNVGLGPA (585 aa)). A glycan (N-linked (GlcNAc...) asparagine) is linked at Asn-110. Residue Asn-545 is glycosylated (N-linked (GlcNAc...) asparagine). Residues 635–655 (GIGMIILGLLLLLLSPLLLLM) traverse the membrane as a helical segment. At 656–1041 (CCCKRRQPEG…RYSNMHYSRQ (386 aa)) the chain is on the cytoplasmic side. Desmoglein repeat repeat units lie at residues 884-910 (TLSE…IVTE) and 911-941 (TYTT…ETVM). Residues 1014–1041 (ISQTTGSTSPMTSQHRVTRYSNMHYSRQ) form a disordered region.

In terms of assembly, interacts with JUP. In terms of tissue distribution, strongly expressed in the skin; during the anagen stage of hair follicles in the matrix, precortex and inner rooth sheath.

Its subcellular location is the cell membrane. It is found in the cell junction. It localises to the desmosome. In terms of biological role, a component of desmosome cell-cell junctions which are required for positive regulation of cellular adhesion. Coordinates the transition from proliferation to differentiation in hair follicle keratinocytes. Plays a role in moderating lymphocyte migration to inflamed skin and maintaining homeostasis of the epidermal inflammatory response. This is Desmoglein-4 (Dsg4) from Mus musculus (Mouse).